The following is a 119-amino-acid chain: MSDSDAMTDPNAVSYSNAIVVLCTAPDEASAQNLAAQVLGEKLAACVTLLPGATSLYYWEGKLEQEYEVQLLFKSNTDHQQALLTYIKQHHPYQTPELLVLPVRDGDKDYLSWLNASLL.

Cu cation-binding residues include C23, H90, and H91.

The protein belongs to the CutA family. Homotrimer. It depends on Cu cation as a cofactor.

It is found in the cytoplasm. Involved in resistance toward heavy metals. This Yersinia pseudotuberculosis serotype O:1b (strain IP 31758) protein is Divalent-cation tolerance protein CutA.